A 101-amino-acid polypeptide reads, in one-letter code: Small ribosomal subunit protein bS18c (101 aa).

Residues methionine 1–leucine 19 are compositionally biased toward basic residues. Disordered regions lie at residues methionine 1–glycine 23 and lysine 82–lysine 101.

It belongs to the bacterial ribosomal protein bS18 family. In terms of assembly, part of the 30S ribosomal subunit.

The protein resides in the plastid. It localises to the chloroplast. The protein is Small ribosomal subunit protein bS18c of Drimys granadensis.